The chain runs to 94 residues: Aspartyl/glutamyl-tRNA(Asn/Gln) amidotransferase subunit C (94 aa).

The protein belongs to the GatC family. As to quaternary structure, heterotrimer of A, B and C subunits.

It catalyses the reaction L-glutamyl-tRNA(Gln) + L-glutamine + ATP + H2O = L-glutaminyl-tRNA(Gln) + L-glutamate + ADP + phosphate + H(+). The catalysed reaction is L-aspartyl-tRNA(Asn) + L-glutamine + ATP + H2O = L-asparaginyl-tRNA(Asn) + L-glutamate + ADP + phosphate + 2 H(+). In terms of biological role, allows the formation of correctly charged Asn-tRNA(Asn) or Gln-tRNA(Gln) through the transamidation of misacylated Asp-tRNA(Asn) or Glu-tRNA(Gln) in organisms which lack either or both of asparaginyl-tRNA or glutaminyl-tRNA synthetases. The reaction takes place in the presence of glutamine and ATP through an activated phospho-Asp-tRNA(Asn) or phospho-Glu-tRNA(Gln). This is Aspartyl/glutamyl-tRNA(Asn/Gln) amidotransferase subunit C from Solidesulfovibrio magneticus (strain ATCC 700980 / DSM 13731 / RS-1) (Desulfovibrio magneticus).